The sequence spans 263 residues: 4-hydroxy-2-oxo-heptane-1,7-dioate aldolase (263 aa).

His-45 (proton acceptor) is an active-site residue. Position 147 (Gln-147) interacts with substrate. Residue Glu-149 coordinates a divalent metal cation. The substrate site is built by Ala-174 and Asp-175. A divalent metal cation is bound at residue Asp-175.

Belongs to the HpcH/HpaI aldolase family. As to quaternary structure, homohexamer; trimer of dimers. Requires a divalent metal cation as cofactor.

It carries out the reaction 4-hydroxy-2-oxoheptanedioate = succinate semialdehyde + pyruvate. It participates in aromatic compound metabolism; 4-hydroxyphenylacetate degradation; pyruvate and succinate semialdehyde from 4-hydroxyphenylacetate: step 7/7. Functionally, catalyzes the reversible retro-aldol cleavage of 4-hydroxy-2-ketoheptane-1,7-dioate (HKHD) to pyruvate and succinic semialdehyde. The chain is 4-hydroxy-2-oxo-heptane-1,7-dioate aldolase from Salmonella newport (strain SL254).